Reading from the N-terminus, the 691-residue chain is Probable E3 ubiquitin-protein ligase RHG1A (691 aa).

Disordered stretches follow at residues 71 to 91 (SLGEASSSGTKDEASSHNEQR), 151 to 235 (GPGT…PRGM), 316 to 336 (SFVVSRNPNSTPVSIPPGSRT), 349 to 373 (VGGTSNSTAPVERNLHLDETRSRSI), and 395 to 501 (QSSR…MHNR). Over residues 80–91 (TKDEASSHNEQR) the composition is skewed to basic and acidic residues. Composition is skewed to polar residues over residues 204-213 (GESSSWTPGS) and 317-328 (FVVSRNPNSTPV). Residues 361–370 (RNLHLDETRS) are compositionally biased toward basic and acidic residues. The segment covering 395–406 (QSSRNVTNGNLN) has biased composition (polar residues). The segment covering 407-419 (SASSVSRTGSTTS) has biased composition (low complexity). Residues 429-440 (NLAWTSYQNSPH) show a composition bias toward polar residues. Over residues 454–465 (RSLLSSLAADAT) the composition is skewed to low complexity. Residues 637–678 (CCVCQEEYTEGEDMGTLECGHEFHSQCIKEWLKQKNLCPICK) form an RING-type; atypical zinc finger.

As to expression, expressed in stems, flowers, green siliques, cauline leaves, seeds and roots.

It carries out the reaction S-ubiquitinyl-[E2 ubiquitin-conjugating enzyme]-L-cysteine + [acceptor protein]-L-lysine = [E2 ubiquitin-conjugating enzyme]-L-cysteine + N(6)-ubiquitinyl-[acceptor protein]-L-lysine.. Its pathway is protein modification; protein ubiquitination. In terms of biological role, probable E3 ubiquitin-protein ligase that may possess E3 ubiquitin ligase activity in vitro. The protein is Probable E3 ubiquitin-protein ligase RHG1A of Arabidopsis thaliana (Mouse-ear cress).